A 415-amino-acid polypeptide reads, in one-letter code: N-succinylarginine dihydrolase (415 aa).

Substrate-binding positions include 18-27 (AGLSRGNIAS), N100, and 127-128 (HR). E161 is a catalytic residue. R193 is a binding site for substrate. The active site involves H229. Residues D231 and N340 each coordinate substrate. The active-site Nucleophile is the C346.

The protein belongs to the succinylarginine dihydrolase family. As to quaternary structure, homodimer.

The enzyme catalyses N(2)-succinyl-L-arginine + 2 H2O + 2 H(+) = N(2)-succinyl-L-ornithine + 2 NH4(+) + CO2. Its pathway is amino-acid degradation; L-arginine degradation via AST pathway; L-glutamate and succinate from L-arginine: step 2/5. Functionally, catalyzes the hydrolysis of N(2)-succinylarginine into N(2)-succinylornithine, ammonia and CO(2). In Sphingopyxis alaskensis (strain DSM 13593 / LMG 18877 / RB2256) (Sphingomonas alaskensis), this protein is N-succinylarginine dihydrolase.